Consider the following 293-residue polypeptide: 3-hydroxybutyryl-CoA dehydrogenase (293 aa).

This sequence belongs to the 3-hydroxyacyl-CoA dehydrogenase family.

The catalysed reaction is (3S)-3-hydroxybutanoyl-CoA + NADP(+) = acetoacetyl-CoA + NADPH + H(+). Its pathway is lipid metabolism; butanoate metabolism. In Bradyrhizobium diazoefficiens (strain JCM 10833 / BCRC 13528 / IAM 13628 / NBRC 14792 / USDA 110), this protein is 3-hydroxybutyryl-CoA dehydrogenase (hbdA).